Consider the following 1048-residue polypeptide: PH and SEC7 domain-containing protein 3 (1048 aa).

Over residues 36 to 45 (SEGKAPDTSD) the composition is skewed to basic and acidic residues. The segment at 36–57 (SEGKAPDTSDHGGSTLLPPNVT) is disordered. S76 bears the Phosphoserine mark. 4 disordered regions span residues 104–126 (LDSV…LKEQ), 310–342 (GGDK…KVPR), 364–383 (SWKA…SPVR), and 395–434 (QENK…PGYT). Residues 311 to 321 (GDKRETQHPID) show a composition bias toward basic and acidic residues. Over residues 397–423 (NKQHLEKTPKPERDRERISEQEEHVKG) the composition is skewed to basic and acidic residues. Residues 534–734 (TKGTPEIAFW…KALYNSIKNE (201 aa)) form the SEC7 domain. The span at 741–758 (DDEEKKKSPSESTEEKAN) shows a compositional bias: basic and acidic residues. The disordered stretch occupies residues 741 to 769 (DDEEKKKSPSESTEEKANGTHPKTISRIG). Position 770 is a phosphoserine (S770). One can recognise a PH domain in the interval 785-898 (AVYKSGFLAR…WINKINCVAA (114 aa)). The stretch at 922 to 952 (ATTTKLSQEEQLKSHESKLKQITTELAEHRS) forms a coiled coil. A disordered region spans residues 999-1048 (DESEAAGLKKSHSSPSLNPDTSPITAKVKRNVSERKDHRPETPSIKQKVT). Residues S1009, S1011, S1012, S1014, and S1020 each carry the phosphoserine modification. The span at 1011–1022 (SSPSLNPDTSPI) shows a compositional bias: polar residues. Over residues 1029 to 1039 (NVSERKDHRPE) the composition is skewed to basic and acidic residues.

In terms of tissue distribution, isoform 2 is expressed in epididymis (at protein level).

The protein resides in the cell membrane. It is found in the cell projection. It localises to the ruffle membrane. The protein localises to the postsynaptic density. In terms of biological role, guanine nucleotide exchange factor for ARF6. This chain is PH and SEC7 domain-containing protein 3 (PSD3), found in Homo sapiens (Human).